The following is a 134-amino-acid chain: uncharacterized protein (134 aa).

Positions 59 to 92 are disordered; sequence VSKPKRRSPHPHGNKAADKRKTTEKEPERKKRVG. Over residues 61-71 the composition is skewed to basic residues; it reads KPKRRSPHPHG. Over residues 73–87 the composition is skewed to basic and acidic residues; it reads KAADKRKTTEKEPER.

This is an uncharacterized protein from Saccharomyces cerevisiae (strain ATCC 204508 / S288c) (Baker's yeast).